The following is a 636-amino-acid chain: Chaperone protein DnaK (636 aa).

Thr203 bears the Phosphothreonine; by autocatalysis mark. The disordered stretch occupies residues 602 to 636 (VYGKQQEGAPAQEEPSAEGKKADDEGTVEGEFREV). Positions 618–636 (AEGKKADDEGTVEGEFREV) are enriched in basic and acidic residues.

This sequence belongs to the heat shock protein 70 family.

Functionally, acts as a chaperone. The polypeptide is Chaperone protein DnaK (Dehalococcoides mccartyi (strain CBDB1)).